Here is a 101-residue protein sequence, read N- to C-terminus: Large ribosomal subunit protein eL30 (101 aa).

The protein belongs to the eukaryotic ribosomal protein eL30 family.

This is Large ribosomal subunit protein eL30 from Pyrobaculum islandicum (strain DSM 4184 / JCM 9189 / GEO3).